Consider the following 325-residue polypeptide: Acetyl-coenzyme A carboxylase carboxyl transferase subunit alpha (325 aa).

One can recognise a CoA carboxyltransferase C-terminal domain in the interval 35–292 (EIEKLEARLA…DKVLKRSLKQ (258 aa)).

The protein belongs to the AccA family. As to quaternary structure, acetyl-CoA carboxylase is a heterohexamer composed of biotin carboxyl carrier protein (AccB), biotin carboxylase (AccC) and two subunits each of ACCase subunit alpha (AccA) and ACCase subunit beta (AccD).

It localises to the cytoplasm. It carries out the reaction N(6)-carboxybiotinyl-L-lysyl-[protein] + acetyl-CoA = N(6)-biotinyl-L-lysyl-[protein] + malonyl-CoA. It participates in lipid metabolism; malonyl-CoA biosynthesis; malonyl-CoA from acetyl-CoA: step 1/1. In terms of biological role, component of the acetyl coenzyme A carboxylase (ACC) complex. First, biotin carboxylase catalyzes the carboxylation of biotin on its carrier protein (BCCP) and then the CO(2) group is transferred by the carboxyltransferase to acetyl-CoA to form malonyl-CoA. The chain is Acetyl-coenzyme A carboxylase carboxyl transferase subunit alpha from Geobacillus sp. (strain WCH70).